The sequence spans 147 residues: uncharacterized protein (147 aa).

This is an uncharacterized protein from Acidianus filamentous virus 2 (isolate Italy/Pozzuoli) (AFV-2).